Consider the following 353-residue polypeptide: MTEPLKPRIDFDGPLEVDQNPKFRAQQTFDENQAQNFAPATLDEAPEEEGQVEAVMDAALRPKRSLWRKMVMGGLALFGASVVGQGVQWTMNAWQTQDWVALGGCAAGALIIGAGVGSVVTEWRRLWRLRQRAHERDEARDLLHSHGTGKGRAFCEKLAQQAGIDQSHPALQRWYASIHETQNDREVVSLYAHLVQPVLDAQARREISRSAAESTLMIAVSPLALVDMAFIAWRNLRLINRIATLYGIELGYYSRLRLFKLVLLNIAFAGASELVREVGMDWMSQDLAARLSTRAAQGIGAGLLTARLGIKAMELCRPLPWIDDDKPRLGDFRRQLIGQVKETLQKGKTPSEK.

Helical transmembrane passes span 70–90 (MVMG…VQWT), 100–120 (VALG…GSVV), and 213–233 (ESTL…FIAW).

Belongs to the UPF0283 family.

The protein resides in the cell inner membrane. The chain is UPF0283 membrane protein YcjF from Escherichia coli O139:H28 (strain E24377A / ETEC).